We begin with the raw amino-acid sequence, 429 residues long: Ribosomal RNA small subunit methyltransferase B (429 aa).

S-adenosyl-L-methionine contacts are provided by residues 254–260 (CAAPGGK), Asp-277, Asp-303, and Asp-322. Cys-375 (nucleophile) is an active-site residue.

The protein belongs to the class I-like SAM-binding methyltransferase superfamily. RsmB/NOP family.

The protein localises to the cytoplasm. It carries out the reaction cytidine(967) in 16S rRNA + S-adenosyl-L-methionine = 5-methylcytidine(967) in 16S rRNA + S-adenosyl-L-homocysteine + H(+). Functionally, specifically methylates the cytosine at position 967 (m5C967) of 16S rRNA. The protein is Ribosomal RNA small subunit methyltransferase B of Shigella flexneri.